Consider the following 405-residue polypeptide: Diaminopimelate decarboxylase (405 aa).

N6-(pyridoxal phosphate)lysine is present on Lys46. Residues Gly225 and Glu259–Arg262 each bind pyridoxal 5'-phosphate. Substrate is bound by residues Arg262, Arg298, and Tyr302. Cys329 acts as the Proton donor in catalysis. 2 residues coordinate substrate: Glu330 and Tyr358. Tyr358 contacts pyridoxal 5'-phosphate.

Belongs to the Orn/Lys/Arg decarboxylase class-II family. LysA subfamily. Homodimer. The cofactor is pyridoxal 5'-phosphate.

The enzyme catalyses meso-2,6-diaminopimelate + H(+) = L-lysine + CO2. The protein operates within amino-acid biosynthesis; L-lysine biosynthesis via DAP pathway; L-lysine from DL-2,6-diaminopimelate: step 1/1. Its function is as follows. Specifically catalyzes the decarboxylation of meso-diaminopimelate (meso-DAP) to L-lysine. The protein is Diaminopimelate decarboxylase of Helicobacter pylori (strain ATCC 700392 / 26695) (Campylobacter pylori).